We begin with the raw amino-acid sequence, 287 residues long: Putative sugar uptake protein LJ_0170 (287 aa).

10 helical membrane passes run 4-23 (VYLFLPAIGWGLMPLVIASV), 28-50 (VYNQIVGTVAASFIFGAIVMAIM), 56-78 (WSLFLLSALGGACWVIGQVGQYI), 91-108 (ISTGLQLIGVPLVGVLAF), 118-137 (LYGFIGILVLIIGVVLTSFT), 150-169 (VSTIILLVLTSLGYITSSSI), 179-198 (SIFFGQTFGMLVAVFIYTLV), 211-230 (VQSGGAGILYAIAALAYILS), 240-259 (FVISQLCVVISTLGGLIFLH), and 266-285 (GLIFTIAGLILIIGGAMLTT).

It belongs to the GRP transporter (TC 2.A.7.5) family.

The protein localises to the cell membrane. This Lactobacillus johnsonii (strain CNCM I-12250 / La1 / NCC 533) protein is Putative sugar uptake protein LJ_0170.